A 519-amino-acid polypeptide reads, in one-letter code: Galactose-1-phosphate uridylyltransferase (519 aa).

It belongs to the galactose-1-phosphate uridylyltransferase type 2 family.

It localises to the cytoplasm. It catalyses the reaction alpha-D-galactose 1-phosphate + UDP-alpha-D-glucose = alpha-D-glucose 1-phosphate + UDP-alpha-D-galactose. The protein operates within carbohydrate metabolism; galactose metabolism. The chain is Galactose-1-phosphate uridylyltransferase from Caldanaerobacter subterraneus subsp. tengcongensis (strain DSM 15242 / JCM 11007 / NBRC 100824 / MB4) (Thermoanaerobacter tengcongensis).